A 310-amino-acid polypeptide reads, in one-letter code: Prephenate dehydratase (310 aa).

The Prephenate dehydratase domain maps to 3 to 190; the sequence is RIAYLGPEGT…ARTRFVLVGL (188 aa). One can recognise an ACT domain in the interval 204–281; the sequence is AVVLRLVNEP…VDVRYLGSWP (78 aa).

As to quaternary structure, homodimer.

It catalyses the reaction prephenate + H(+) = 3-phenylpyruvate + CO2 + H2O. It functions in the pathway amino-acid biosynthesis; L-phenylalanine biosynthesis; phenylpyruvate from prephenate: step 1/1. This chain is Prephenate dehydratase (pheA), found in Mycolicibacterium smegmatis (strain ATCC 700084 / mc(2)155) (Mycobacterium smegmatis).